A 120-amino-acid polypeptide reads, in one-letter code: Cell cycle protein GpsB (120 aa).

The stretch at L34–S74 forms a coiled coil. Residues V69–N90 form a disordered region. Residues V71 to N90 are compositionally biased toward polar residues.

This sequence belongs to the GpsB family. In terms of assembly, forms polymers through the coiled coil domains. Interacts with PBP1, MreC and EzrA.

It is found in the cytoplasm. Functionally, divisome component that associates with the complex late in its assembly, after the Z-ring is formed, and is dependent on DivIC and PBP2B for its recruitment to the divisome. Together with EzrA, is a key component of the system that regulates PBP1 localization during cell cycle progression. Its main role could be the removal of PBP1 from the cell pole after pole maturation is completed. Also contributes to the recruitment of PBP1 to the division complex. Not essential for septum formation. The sequence is that of Cell cycle protein GpsB from Limosilactobacillus reuteri (strain DSM 20016) (Lactobacillus reuteri).